Here is a 454-residue protein sequence, read N- to C-terminus: MAQWDSFTDQQEDTDSCSESVKFDARSNTALLPPNPKNGPPLQEKLKSFKAALIALYLLVFAVLIPIIAIMAAQLLKWEMKNCTVGSINANSVSSSLLGRGNDSEHEVRFREVVMEHISKMEKRIQYISDTEENLVDSEHFQNFSVTTDQRFADVLLQLSTLVPTVQGHGNAVDEITRSLISLNTTLLDLHLYVETLNVKFQENTLKGQEEISKLKERVHNASAEIMSMKEEQVHLEQEIKREVKVLNNITNDLRLKDWEHSQTLRNITLIQGPPGPPGEKGDRGPTGESGPPGVPGPVGPPGLKGDRGSIGFPGSRGYPGQSGKTGRTGYPGPKGQKGEKGSGSILTPSATVRLVGGRGPHEGRVEILHNGQWGTVCDDHWELRAGQVVCRSLGYRGVKSVHKKAYFGQGTGPIWLNEVPCLGMESSIEECKIRQWGVRVCSHGEDAGVTCTL.

The segment at 1-22 (MAQWDSFTDQQEDTDSCSESVK) is disordered. Residues 1–50 (MAQWDSFTDQQEDTDSCSESVKFDARSNTALLPPNPKNGPPLQEKLKSFK) lie on the Cytoplasmic side of the membrane. Serine 27 carries the post-translational modification Phosphoserine. A helical; Signal-anchor for type II membrane protein membrane pass occupies residues 51–73 (AALIALYLLVFAVLIPIIAIMAA). Residues 74–109 (QLLKWEMKNCTVGSINANSVSSSLLGRGNDSEHEVR) form a spacer region. At 74–454 (QLLKWEMKNC…GEDAGVTCTL (381 aa)) the chain is on the extracellular side. Asparagine 82, asparagine 102, asparagine 143, asparagine 184, asparagine 221, asparagine 249, and asparagine 267 each carry an N-linked (GlcNAc...) asparagine glycan. A coiled-coil region spans residues 199 to 256 (VKFQENTLKGQEEISKLKERVHNASAEIMSMKEEQVHLEQEIKREVKVLNNITNDLRL). The disordered stretch occupies residues 267 to 347 (NITLIQGPPG…KGEKGSGSIL (81 aa)). In terms of domain architecture, Collagen-like spans 273-344 (GPPGPPGEKG…KGQKGEKGSG (72 aa)). In terms of domain architecture, SRCR spans 353–453 (VRLVGGRGPH…HGEDAGVTCT (101 aa)). 3 disulfide bridges follow: cysteine 378–cysteine 442, cysteine 391–cysteine 452, and cysteine 422–cysteine 432.

Homotrimer. Interacts with MYO18A.

Its subcellular location is the membrane. Its function is as follows. Membrane glycoproteins implicated in the pathologic deposition of cholesterol in arterial walls during atherogenesis. Two types of receptor subunits exist. These receptors mediate the endocytosis of a diverse group of macromolecules, including modified low density lipoproteins (LDL). This is Macrophage scavenger receptor types I and II (MSR1) from Oryctolagus cuniculus (Rabbit).